Consider the following 418-residue polypeptide: NADH-quinone oxidoreductase subunit D (418 aa).

The protein belongs to the complex I 49 kDa subunit family. NDH-1 is composed of 14 different subunits. Subunits NuoB, C, D, E, F, and G constitute the peripheral sector of the complex.

It localises to the cell inner membrane. It catalyses the reaction a quinone + NADH + 5 H(+)(in) = a quinol + NAD(+) + 4 H(+)(out). NDH-1 shuttles electrons from NADH, via FMN and iron-sulfur (Fe-S) centers, to quinones in the respiratory chain. The immediate electron acceptor for the enzyme in this species is believed to be ubiquinone. Couples the redox reaction to proton translocation (for every two electrons transferred, four hydrogen ions are translocated across the cytoplasmic membrane), and thus conserves the redox energy in a proton gradient. This chain is NADH-quinone oxidoreductase subunit D, found in Neisseria meningitidis serogroup B (strain ATCC BAA-335 / MC58).